We begin with the raw amino-acid sequence, 84 residues long: Large ribosomal subunit protein bL31B (84 aa).

It belongs to the bacterial ribosomal protein bL31 family. Type B subfamily. As to quaternary structure, part of the 50S ribosomal subunit.

This chain is Large ribosomal subunit protein bL31B, found in Rhodococcus opacus (strain B4).